A 103-amino-acid polypeptide reads, in one-letter code: Probable pterin-4-alpha-carbinolamine dehydratase (103 aa).

It belongs to the pterin-4-alpha-carbinolamine dehydratase family.

It catalyses the reaction (4aS,6R)-4a-hydroxy-L-erythro-5,6,7,8-tetrahydrobiopterin = (6R)-L-erythro-6,7-dihydrobiopterin + H2O. Involved in tetrahydrobiopterin biosynthesis. The polypeptide is Probable pterin-4-alpha-carbinolamine dehydratase (Pcd) (Hypsibius exemplaris (Freshwater tardigrade)).